We begin with the raw amino-acid sequence, 112 residues long: Notch-regulated ankyrin repeat-containing protein A (112 aa).

ANK repeat units lie at residues 48–77 and 81–110; these read EGQT…DIRL and EGWS…YSSG.

This sequence belongs to the NRARP family.

Regulates independently canonical Wnt and Notch signaling by modulating LEF1 and Notch protein turnover. Stabilizes LEF1, a pivotal transcription factor in the Wnt signaling cascade, by blocking its ubiquitination. Involved in angiogenesis; involved in intersegmental vessel patterning during development. In Danio rerio (Zebrafish), this protein is Notch-regulated ankyrin repeat-containing protein A (nrarpa).